The sequence spans 285 residues: ATP phosphoribosyltransferase (285 aa).

This sequence belongs to the ATP phosphoribosyltransferase family. Long subfamily. The cofactor is Mg(2+).

The protein resides in the cytoplasm. It carries out the reaction 1-(5-phospho-beta-D-ribosyl)-ATP + diphosphate = 5-phospho-alpha-D-ribose 1-diphosphate + ATP. It participates in amino-acid biosynthesis; L-histidine biosynthesis; L-histidine from 5-phospho-alpha-D-ribose 1-diphosphate: step 1/9. With respect to regulation, feedback inhibited by histidine. In terms of biological role, catalyzes the condensation of ATP and 5-phosphoribose 1-diphosphate to form N'-(5'-phosphoribosyl)-ATP (PR-ATP). Has a crucial role in the pathway because the rate of histidine biosynthesis seems to be controlled primarily by regulation of HisG enzymatic activity. The chain is ATP phosphoribosyltransferase from Sulfurisphaera tokodaii (strain DSM 16993 / JCM 10545 / NBRC 100140 / 7) (Sulfolobus tokodaii).